The chain runs to 482 residues: DNA polymerase II small subunit (482 aa).

It belongs to the DNA polymerase delta/II small subunit family. As to quaternary structure, heterodimer of a large subunit and a small subunit.

It catalyses the reaction DNA(n) + a 2'-deoxyribonucleoside 5'-triphosphate = DNA(n+1) + diphosphate. The catalysed reaction is Exonucleolytic cleavage in the 3'- to 5'-direction to yield nucleoside 5'-phosphates.. Its function is as follows. Possesses two activities: a DNA synthesis (polymerase) and an exonucleolytic activity that degrades single-stranded DNA in the 3' to 5' direction. Has a template-primer preference which is characteristic of a replicative DNA polymerase. This chain is DNA polymerase II small subunit (polB), found in Methanothermobacter thermautotrophicus (strain ATCC 29096 / DSM 1053 / JCM 10044 / NBRC 100330 / Delta H) (Methanobacterium thermoautotrophicum).